A 207-amino-acid chain; its full sequence is Outer-membrane lipoprotein LolB (207 aa).

Residues 1–21 (MPTKTVRCLRLLPLASLLLAA) form the signal peptide. Cys22 is lipidated: N-palmitoyl cysteine. Cys22 is lipidated: S-diacylglycerol cysteine.

The protein belongs to the LolB family. In terms of assembly, monomer.

Its subcellular location is the cell outer membrane. Plays a critical role in the incorporation of lipoproteins in the outer membrane after they are released by the LolA protein. The chain is Outer-membrane lipoprotein LolB from Pectobacterium atrosepticum (strain SCRI 1043 / ATCC BAA-672) (Erwinia carotovora subsp. atroseptica).